Reading from the N-terminus, the 147-residue chain is Fibromodulin (147 aa).

LRR repeat units follow at residues 1–15, 16–37, 40–61, 63–84, 85–105, and 108–128; these read LDHN…PLPR, SLRE…ALEG, NLTA…MRGL, SLIL…LPSA, LEQL…YFRG, and KLLY…ASNT. An N-linked (GlcNAc...) asparagine glycan is attached at Asn-5. Asn-40 carries N-linked (GlcNAc...) asparagine glycosylation. Asn-130 is a glycosylation site (N-linked (GlcNAc...) asparagine). The stretch at 133–147 is one LRR 7 repeat; sequence SLLELDLSYNQLQKI.

The protein belongs to the small leucine-rich proteoglycan (SLRP) family. SLRP class II subfamily. In terms of assembly, binds to type I and type II collagen. In terms of processing, binds keratan sulfate chains. Sulfated on tyrosine residues. Post-translationally, the N-terminus is blocked by a pyrrolidone carboxylic acid generated by post-translational modification of N-terminal glutamine.

It localises to the secreted. The protein resides in the extracellular space. It is found in the extracellular matrix. Affects the rate of fibrils formation. May have a primary role in collagen fibrillogenesis. The chain is Fibromodulin (FMOD) from Oryctolagus cuniculus (Rabbit).